The following is a 760-amino-acid chain: Catecholate siderophore receptor Fiu (760 aa).

The first 31 residues, 1 to 31 (MENNRNFPARQFHSLTFFAGLCIGITPVAQA), serve as a signal peptide directing secretion. The region spanning 67–175 (PVADTTRTMT…PTGSINMISK (109 aa)) is the TBDR plug domain. The 581-residue stretch at 180 to 760 (DSGIDASASI…TFLLTANMHF (581 aa)) folds into the TBDR beta-barrel domain. Residues 743 to 760 (RYHPGEPRTFLLTANMHF) carry the TonB C-terminal box motif.

Belongs to the TonB-dependent receptor family.

The protein localises to the cell outer membrane. Functionally, involved in the active transport across the outer membrane of iron complexed with catecholate siderophores such as dihydroxybenzoylserine and dihydroxybenzoate. It derives its energy for transport by interacting with the trans-periplasmic membrane protein TonB. Can also transport catechol-substituted cephalosporins. Receptor for microcins M, H47 and E492. The sequence is that of Catecholate siderophore receptor Fiu (fiu) from Escherichia coli O6:H1 (strain CFT073 / ATCC 700928 / UPEC).